The primary structure comprises 493 residues: Acetylcholine receptor subunit epsilon (493 aa).

The first 20 residues, 1 to 20 (MARAPLGVLLLLGLLGRGVG), serve as a signal peptide directing secretion. The Extracellular portion of the chain corresponds to 21 to 239 (KNEELRLYHH…VIYSLIIRRK (219 aa)). N-linked (GlcNAc...) asparagine glycosylation is found at Asn86 and Asn161. Cys148 and Cys162 are oxidised to a cystine. The chain crosses the membrane as a helical span at residues 240 to 264 (PLFYVINIIVPCVLISGLVLLAYFL). Over 265–272 (PAQAGGQK) the chain is Cytoplasmic. Residues 273 to 291 (CTVSINVLLAQTVFLFLIA) traverse the membrane as a helical segment. Topologically, residues 292–306 (QKIPETSLSVPLLGR) are extracellular. The chain crosses the membrane as a helical span at residues 307 to 328 (FLIFVMVVATLIVMNCVIVLNV). At 329-456 (SQRTPTTHAM…WVRMGNALDN (128 aa)) the chain is on the cytoplasmic side. A helical membrane pass occupies residues 457 to 480 (ICFWAALVLFSVGSSLIFLGAYFN). The Extracellular segment spans residues 481-493 (RVPDLPYAPCIQP).

This sequence belongs to the ligand-gated ion channel (TC 1.A.9) family. Acetylcholine receptor (TC 1.A.9.1) subfamily. Epsilon/CHRNE sub-subfamily. As to quaternary structure, pentamer of two alpha chains, and one each of the beta, delta, and gamma (in immature muscle) or epsilon (in mature muscle) chains. The muscle heteropentamer composed of alpha-1, beta-1, delta, epsilon subunits interacts with the alpha-conotoxin ImII.

The protein localises to the postsynaptic cell membrane. It localises to the cell membrane. The enzyme catalyses K(+)(in) = K(+)(out). It catalyses the reaction Na(+)(in) = Na(+)(out). Its function is as follows. After binding acetylcholine, the AChR responds by an extensive change in conformation that affects all subunits and leads to opening of an ion-conducting channel across the plasma membrane. The chain is Acetylcholine receptor subunit epsilon from Homo sapiens (Human).